The primary structure comprises 355 residues: MLDRLEGVEQRFLEVESLLSDPKIVGDQKVYQKYVREHADLSKVVEAYREYKQVLEGLEESKELLKDPDPDIKDLAKEEIDRLDKEQVRLEDELKILLLPKDPNDDKNVILEIRAGTGGDEAGLFAADLFRMYSRYAETRGWKVETLSEHLTGVGGIKEIAAMITGQGVYSAFKFESGTHRVQRVPVTEAQGRIHTSACTVAVLPEAEEVDIQIDPSEIRVDVYRSQGAGGQHVNTTDSAVRLTHLPTGVVVTCQDEKSQHKNKAKAMKVLRARLLDHAVQEQNASISAERKSQVGSGDRSERIRTYNYPQGRVTDHRIGLTLYKLESIMAGQISEIVDALTTHYNAEALQEGGL.

Residue Gln-232 is modified to N5-methylglutamine. The interval 282-309 is disordered; the sequence is EQNASISAERKSQVGSGDRSERIRTYNY. A compositionally biased stretch (basic and acidic residues) spans 289–305; that stretch reads AERKSQVGSGDRSERIR.

Belongs to the prokaryotic/mitochondrial release factor family. In terms of processing, methylated by PrmC. Methylation increases the termination efficiency of RF1.

Its subcellular location is the cytoplasm. Peptide chain release factor 1 directs the termination of translation in response to the peptide chain termination codons UAG and UAA. The polypeptide is Peptide chain release factor 1 (Desulfatibacillum aliphaticivorans).